A 600-amino-acid polypeptide reads, in one-letter code: Oligopeptide-binding protein OppA (600 aa).

The first 22 residues, 1–22, serve as a signal peptide directing secretion; that stretch reads MNKLKVTLLASSVVLAATLLSA. Residue Cys-23 is the site of N-palmitoyl cysteine attachment. Cys-23 carries S-diacylglycerol cysteine lipidation.

The protein belongs to the bacterial solute-binding protein 5 family. In terms of assembly, the complex is composed of two ATP-binding proteins (OppD and OppF), two transmembrane proteins (OppB and OppC) and a solute-binding protein (OppA).

The protein resides in the cell membrane. Functionally, part of the ABC transporter complex OppABCDF involved in the uptake of oligopeptides. In Lactococcus lactis subsp. cremoris (strain SK11), this protein is Oligopeptide-binding protein OppA.